Reading from the N-terminus, the 70-residue chain is Metallothionein-like protein 1 (70 aa).

It belongs to the metallothionein superfamily. Type 15 family.

Functionally, metallothioneins have a high content of cysteine residues that bind various heavy metals. The polypeptide is Metallothionein-like protein 1 (MT1) (Festuca rubra (Red fescue)).